Consider the following 449-residue polypeptide: tRNA(Ile)-lysidine synthase (449 aa).

35–40 contacts ATP; the sequence is SGGIDS.

Belongs to the tRNA(Ile)-lysidine synthase family.

It is found in the cytoplasm. The catalysed reaction is cytidine(34) in tRNA(Ile2) + L-lysine + ATP = lysidine(34) in tRNA(Ile2) + AMP + diphosphate + H(+). Functionally, ligates lysine onto the cytidine present at position 34 of the AUA codon-specific tRNA(Ile) that contains the anticodon CAU, in an ATP-dependent manner. Cytidine is converted to lysidine, thus changing the amino acid specificity of the tRNA from methionine to isoleucine. The protein is tRNA(Ile)-lysidine synthase of Coxiella burnetii (strain RSA 493 / Nine Mile phase I).